An 873-amino-acid chain; its full sequence is Leucine--tRNA ligase (873 aa).

Positions 42-52 match the 'HIGH' region motif; that stretch reads PYPSGKLHMGH. Positions 628 to 632 match the 'KMSKS' region motif; the sequence is KMAKS. ATP is bound at residue Lys-631.

Belongs to the class-I aminoacyl-tRNA synthetase family.

The protein localises to the cytoplasm. It carries out the reaction tRNA(Leu) + L-leucine + ATP = L-leucyl-tRNA(Leu) + AMP + diphosphate. This Aromatoleum aromaticum (strain DSM 19018 / LMG 30748 / EbN1) (Azoarcus sp. (strain EbN1)) protein is Leucine--tRNA ligase.